The following is a 127-amino-acid chain: METSSRELQAAEYLEKHQIKEVVSYLTSALLFFRPEKPKEYLISLLERLRIAKVTGVAFPFFMDNSNIVAMFEMMDSSGRGTISFVQYKEALKTLGLCTEDEDLQDDGHKITLDKFKEEVNKRMKEI.

The region spanning 63 to 98 (MDNSNIVAMFEMMDSSGRGTISFVQYKEALKTLGLC) is the EF-hand domain.

In Homo sapiens (Human), this protein is EF-hand calcium-binding domain-containing protein 10 (EFCAB10).